A 645-amino-acid polypeptide reads, in one-letter code: Methionine--tRNA ligase (645 aa).

The short motif at 13 to 23 is the 'HIGH' region element; sequence YYPSTNLHIGN. Positions 128, 131, 145, and 148 each coordinate Zn(2+). Residues 298–302 carry the 'KMSKS' region motif; the sequence is KMSKS. ATP is bound at residue Lys301. In terms of domain architecture, tRNA-binding spans 544–645; it reads DFDKIDLRVV…GEMLTGSQVR (102 aa).

This sequence belongs to the class-I aminoacyl-tRNA synthetase family. MetG type 2A subfamily. In terms of assembly, homodimer. Requires Zn(2+) as cofactor.

The protein localises to the cytoplasm. The catalysed reaction is tRNA(Met) + L-methionine + ATP = L-methionyl-tRNA(Met) + AMP + diphosphate. Is required not only for elongation of protein synthesis but also for the initiation of all mRNA translation through initiator tRNA(fMet) aminoacylation. The chain is Methionine--tRNA ligase (metG) from Clostridium perfringens (strain 13 / Type A).